A 79-amino-acid chain; its full sequence is RNA-binding protein Hfq (79 aa).

In terms of domain architecture, Sm spans 10 to 70 (DAFLNHVRKT…ISTIMPAQPI (61 aa)).

The protein belongs to the Hfq family. In terms of assembly, homohexamer.

Functionally, RNA chaperone that binds small regulatory RNA (sRNAs) and mRNAs to facilitate mRNA translational regulation in response to envelope stress, environmental stress and changes in metabolite concentrations. Also binds with high specificity to tRNAs. In Ruegeria pomeroyi (strain ATCC 700808 / DSM 15171 / DSS-3) (Silicibacter pomeroyi), this protein is RNA-binding protein Hfq.